We begin with the raw amino-acid sequence, 247 residues long: tRNA pseudouridine synthase A (247 aa).

Asp-53 acts as the Nucleophile in catalysis. Tyr-111 provides a ligand contact to substrate.

Belongs to the tRNA pseudouridine synthase TruA family. In terms of assembly, homodimer.

It catalyses the reaction uridine(38/39/40) in tRNA = pseudouridine(38/39/40) in tRNA. In terms of biological role, formation of pseudouridine at positions 38, 39 and 40 in the anticodon stem and loop of transfer RNAs. This Lacticaseibacillus casei (strain BL23) (Lactobacillus casei) protein is tRNA pseudouridine synthase A.